A 115-amino-acid polypeptide reads, in one-letter code: Immunoglobulin kappa chain variable 12-41 (115 aa).

The signal sequence occupies residues 1–20 (MSVLTQVLALLLLWLTGARC). The framework-1 stretch occupies residues 21–43 (DIQMTQSPASLSASVGETVTITC). Cysteine 43 and cysteine 108 form a disulfide bridge. Residues 44-54 (RASGNIHNYLA) are complementarity-determining-1. A framework-2 region spans residues 55-69 (WYQQKQGKSPQLLVY). The tract at residues 70–76 (NAKTLAD) is complementarity-determining-2. Residues 77–108 (GVPSRFSGSGSGTQYSLKINSLQPEDFGSYYC) form a framework-3 region. The segment at 109 to 115 (QHFWSTP) is complementarity-determining-3.

This Mus musculus (Mouse) protein is Immunoglobulin kappa chain variable 12-41.